The sequence spans 273 residues: DnaJ homolog subfamily C member 27 (273 aa).

The tract at residues 1 to 18 (MEASMPKRKEPGKSLRIK) is required for interaction with MAPK1. GTP is bound by residues 23–30 (GNAEVGKS), 71–75 (DMAGD), and 134–137 (NKID). Residues 217–273 (DSWDMLGVKPGASRDEVNKAYRKLAVLLHPDKCVAPGSEDAFKAVVNARTALLKNIK) enclose the J domain.

It belongs to the small GTPase superfamily. Rab family. In terms of assembly, interacts directly with MAPK1 (wild-type and kinase-deficient forms). Interacts directly (in GTP-bound form) with MAP2K1 (wild-type and kinase-deficient forms).

The protein localises to the nucleus. Its function is as follows. GTPase which can activate the MEK/ERK pathway and induce cell transformation when overexpressed. May act as a nuclear scaffold for MAPK1, probably by association with MAPK1 nuclear export signal leading to enhanced ERK1/ERK2 signaling. This chain is DnaJ homolog subfamily C member 27 (DNAJC27), found in Bos taurus (Bovine).